A 156-amino-acid polypeptide reads, in one-letter code: MPRRRVVGQRKILPDPKFKSELLAKFINVIMQDGKKSTAEKIIYKALDTASEKKGEDHLVILEAALDNVRPSVEVKSRRVGGSTYQVPCEVRPVRRNALAMRWLVEAARKRGEKSMALRLAGEMLDASENKGTAVKKREDVHRMAEANKAFAHYRW.

The protein belongs to the universal ribosomal protein uS7 family. Part of the 30S ribosomal subunit. Contacts proteins S9 and S11.

In terms of biological role, one of the primary rRNA binding proteins, it binds directly to 16S rRNA where it nucleates assembly of the head domain of the 30S subunit. Is located at the subunit interface close to the decoding center, probably blocks exit of the E-site tRNA. This is Small ribosomal subunit protein uS7 from Shewanella halifaxensis (strain HAW-EB4).